Reading from the N-terminus, the 404-residue chain is Serine/threonine transporter SstT (404 aa).

Helical transmembrane passes span 17 to 37 (IGIG…VTAI), 44 to 64 (FVGA…VQAI), 75 to 95 (MTLI…VAVI), 138 to 158 (ALAT…GLAL), 179 to 199 (IVVW…FSTV), 212 to 232 (LLIL…NPLL), 287 to 307 (IPLG…VLTL), 319 to 339 (FLTA…ASGV), and 354 to 374 (FGIS…VGVI).

This sequence belongs to the dicarboxylate/amino acid:cation symporter (DAACS) (TC 2.A.23) family.

It is found in the cell membrane. The catalysed reaction is L-serine(in) + Na(+)(in) = L-serine(out) + Na(+)(out). It catalyses the reaction L-threonine(in) + Na(+)(in) = L-threonine(out) + Na(+)(out). Involved in the import of serine and threonine into the cell, with the concomitant import of sodium (symport system). The sequence is that of Serine/threonine transporter SstT from Streptococcus equi subsp. zooepidemicus (strain H70).